We begin with the raw amino-acid sequence, 81 residues long: MAVNKNEYKILIMLKENQCTTELKSFTYTKLCNISKLSMSTVRRSIKKFLELQYVKEGCKQGISKTFYITPNGIEKLKSIM.

As to quaternary structure, monomer; probably dimerizes when bound to DNA. Binds to TubZ when associated with tubC DNA.

Its subcellular location is the host cytoplasm. Functionally, a DNA-binding protein that is part of the type III partition system presumably used to ensure correct segregation of this bacteriophage. Binds to tubC (centromere-like site) DNA upstream of its own gene in a sequence-specific fashion (consensus TTGAC); binds to multiple sites in the tubC region, probably spreading from an initial site. Upon binding to tubC forms flexible loops over about 1 kb of DNA that forms 2 rings, covering tubC and the promoter region. This probably shuts off transcription of the operon. DNA is both bent and untwisted by TubR. The TubR-tubC DNA complex binds to TubZ forming large bundles and decreasing TubZ's GTPase activity. The polypeptide is DNA-binding protein TubR (Clostridium botulinum C phage (Clostridium botulinum C bacteriophage)).